The following is a 231-amino-acid chain: Orotidine 5'-phosphate decarboxylase (231 aa).

Substrate is bound by residues aspartate 11, lysine 34, 61–70, threonine 117, arginine 179, glutamine 188, glycine 208, and arginine 209; that span reads DLKLHDIPNT. Residue lysine 63 is the Proton donor of the active site.

Belongs to the OMP decarboxylase family. Type 1 subfamily. As to quaternary structure, homodimer.

The catalysed reaction is orotidine 5'-phosphate + H(+) = UMP + CO2. The protein operates within pyrimidine metabolism; UMP biosynthesis via de novo pathway; UMP from orotate: step 2/2. Functionally, catalyzes the decarboxylation of orotidine 5'-monophosphate (OMP) to uridine 5'-monophosphate (UMP). In Streptococcus thermophilus (strain CNRZ 1066), this protein is Orotidine 5'-phosphate decarboxylase.